The chain runs to 202 residues: dTTP/UTP pyrophosphatase (202 aa).

Asp-74 (proton acceptor) is an active-site residue.

This sequence belongs to the Maf family. YhdE subfamily. A divalent metal cation is required as a cofactor.

Its subcellular location is the cytoplasm. The catalysed reaction is dTTP + H2O = dTMP + diphosphate + H(+). It carries out the reaction UTP + H2O = UMP + diphosphate + H(+). Its function is as follows. Nucleoside triphosphate pyrophosphatase that hydrolyzes dTTP and UTP. May have a dual role in cell division arrest and in preventing the incorporation of modified nucleotides into cellular nucleic acids. The protein is dTTP/UTP pyrophosphatase of Methylococcus capsulatus (strain ATCC 33009 / NCIMB 11132 / Bath).